The primary structure comprises 223 residues: Sigma non-opioid intracellular receptor 1 (223 aa).

Topologically, residues 1-9 (MPWAAGRRW) are lumenal. The tract at residues 2–8 (PWAAGRR) is targeting to endoplasmic reticulum-associated lipid droplets. Residues 10-30 (AWITLILTIIAVLIQAAWLWL) form a helical membrane-spanning segment. Residues 31-223 (GTQNFVFSRE…LTTYLFGQDS (193 aa)) lie on the Cytoplasmic side of the membrane. The tract at residues 99 to 106 (SLSEYVLL) is important for ligand-binding. The C-terminal hydrophobic region stretch occupies residues 177 to 223 (VIPSTLFFALADTFFSTQDYLTLFYTLRAYARGLRLELTTYLFGQDS).

This sequence belongs to the ERG2 family. In terms of assembly, homotrimer. Interacts with KCNA4. Interacts with KCNA2; cocaine consumption leads to increased interaction. Forms a ternary complex with ANK2 and ITPR3. The complex is disrupted by agonists. Interacts with RNF112 in an oxidative stress-regulated manner. Widely expressed with higher expression in liver, brain, kidney and thymus. Expressed throughout the brain with higher expression within cerebral cortex, hippocampus and cerebellum. Within the hippocampus expressed in cornu ammonis pyramidal neurons, the granular cells of the dentate gyrus as well as interneurons. Within the cerebellum, expressed in Purkinje cell bodies. Highly expressed in the brainstem and motor neurons of the spinal cord. Expressed by neural retina, retinal pigment epithelial cells and lens.

It localises to the nucleus inner membrane. The protein resides in the nucleus outer membrane. Its subcellular location is the nucleus envelope. The protein localises to the cytoplasmic vesicle. It is found in the endoplasmic reticulum membrane. It localises to the membrane. The protein resides in the lipid droplet. Its subcellular location is the cell junction. The protein localises to the cell membrane. It is found in the cell projection. It localises to the growth cone. The protein resides in the postsynaptic density membrane. Functionally, functions in lipid transport from the endoplasmic reticulum and is involved in a wide array of cellular functions probably through regulation of the biogenesis of lipid microdomains at the plasma membrane. Involved in the regulation of different receptors it plays a role in BDNF signaling and EGF signaling. Also regulates ion channels like the potassium channel and could modulate neurotransmitter release. Plays a role in calcium signaling through modulation together with ANK2 of the ITP3R-dependent calcium efflux at the endoplasmic reticulum. Plays a role in several other cell functions including proliferation, survival and death. Originally identified for its ability to bind various psychoactive drugs it is involved in learning processes, memory and mood alteration. Necessary for proper mitochondrial axonal transport in motor neurons, in particular the retrograde movement of mitochondria. Plays a role in protecting cells against oxidative stress-induced cell death via its interaction with RNF112. The polypeptide is Sigma non-opioid intracellular receptor 1 (Sigmar1) (Mus musculus (Mouse)).